The chain runs to 117 residues: Large ribosomal subunit protein bL20 (117 aa).

The protein belongs to the bacterial ribosomal protein bL20 family.

Its function is as follows. Binds directly to 23S ribosomal RNA and is necessary for the in vitro assembly process of the 50S ribosomal subunit. It is not involved in the protein synthesizing functions of that subunit. This is Large ribosomal subunit protein bL20 from Mannheimia succiniciproducens (strain KCTC 0769BP / MBEL55E).